A 431-amino-acid chain; its full sequence is Adenylosuccinate synthetase (431 aa).

GTP-binding positions include 13 to 19 and 41 to 43; these read GDEGKGK and GHT. Aspartate 14 functions as the Proton acceptor in the catalytic mechanism. Mg(2+)-binding residues include aspartate 14 and glycine 41. IMP is bound by residues 14–17, 39–42, threonine 130, arginine 144, glutamine 225, threonine 240, and arginine 304; these read DEGK and NAGH. Histidine 42 acts as the Proton donor in catalysis. Residue 300-306 participates in substrate binding; the sequence is ATTGRER. GTP-binding positions include arginine 306, 332–334, and 415–417; these read KLD and STG.

This sequence belongs to the adenylosuccinate synthetase family. Homodimer. Requires Mg(2+) as cofactor.

It localises to the cytoplasm. It carries out the reaction IMP + L-aspartate + GTP = N(6)-(1,2-dicarboxyethyl)-AMP + GDP + phosphate + 2 H(+). The protein operates within purine metabolism; AMP biosynthesis via de novo pathway; AMP from IMP: step 1/2. Its function is as follows. Plays an important role in the de novo pathway of purine nucleotide biosynthesis. Catalyzes the first committed step in the biosynthesis of AMP from IMP. This is Adenylosuccinate synthetase from Colwellia psychrerythraea (strain 34H / ATCC BAA-681) (Vibrio psychroerythus).